A 431-amino-acid polypeptide reads, in one-letter code: 3-phosphoshikimate 1-carboxyvinyltransferase (431 aa).

K22, S23, and R27 together coordinate 3-phosphoshikimate. Residue K22 participates in phosphoenolpyruvate binding. G94 and R122 together coordinate phosphoenolpyruvate. 3-phosphoshikimate is bound by residues S167, Q169, D315, and K342. Q169 serves as a coordination point for phosphoenolpyruvate. The active-site Proton acceptor is D315. Phosphoenolpyruvate contacts are provided by R346 and R388.

It belongs to the EPSP synthase family. As to quaternary structure, monomer.

The protein localises to the cytoplasm. The enzyme catalyses 3-phosphoshikimate + phosphoenolpyruvate = 5-O-(1-carboxyvinyl)-3-phosphoshikimate + phosphate. It functions in the pathway metabolic intermediate biosynthesis; chorismate biosynthesis; chorismate from D-erythrose 4-phosphate and phosphoenolpyruvate: step 6/7. In terms of biological role, catalyzes the transfer of the enolpyruvyl moiety of phosphoenolpyruvate (PEP) to the 5-hydroxyl of shikimate-3-phosphate (S3P) to produce enolpyruvyl shikimate-3-phosphate and inorganic phosphate. The polypeptide is 3-phosphoshikimate 1-carboxyvinyltransferase (Pelobacter propionicus (strain DSM 2379 / NBRC 103807 / OttBd1)).